A 92-amino-acid polypeptide reads, in one-letter code: C-C motif chemokine 4 (92 aa).

Residues 1–23 (MKLCVTVLSLLVLMAAFCSPALS) form the signal peptide. 2 cysteine pairs are disulfide-bonded: Cys34–Cys58 and Cys35–Cys74.

This sequence belongs to the intercrine beta (chemokine CC) family. As to quaternary structure, homodimer. Interacts with CCR5.

It is found in the secreted. Its function is as follows. Monokine with inflammatory and chemokinetic properties. In Bos taurus (Bovine), this protein is C-C motif chemokine 4 (CCL4).